Reading from the N-terminus, the 457-residue chain is Oxygen-independent coproporphyrinogen III oxidase (457 aa).

The region spanning Leu47 to Leu279 is the Radical SAM core domain. An S-adenosyl-L-methionine-binding site is contributed by Tyr56. Residues Cys62 and Cys66 each contribute to the [4Fe-4S] cluster site. Phe68 is an S-adenosyl-L-methionine binding site. Cys69 contributes to the [4Fe-4S] cluster binding site. S-adenosyl-L-methionine-binding positions include Gly113, Gly114–Thr115, Glu147, Gln174, Arg186, Asp211, Ala245, and Ile331.

This sequence belongs to the anaerobic coproporphyrinogen-III oxidase family. In terms of assembly, monomer. [4Fe-4S] cluster serves as cofactor.

It is found in the cytoplasm. The enzyme catalyses coproporphyrinogen III + 2 S-adenosyl-L-methionine = protoporphyrinogen IX + 2 5'-deoxyadenosine + 2 L-methionine + 2 CO2. It functions in the pathway porphyrin-containing compound metabolism; protoporphyrin-IX biosynthesis; protoporphyrinogen-IX from coproporphyrinogen-III (AdoMet route): step 1/1. Its function is as follows. Involved in the heme biosynthesis. Catalyzes the anaerobic oxidative decarboxylation of propionate groups of rings A and B of coproporphyrinogen III to yield the vinyl groups in protoporphyrinogen IX. This is Oxygen-independent coproporphyrinogen III oxidase (hemN) from Helicobacter pylori (strain ATCC 700392 / 26695) (Campylobacter pylori).